Consider the following 316-residue polypeptide: Aspartate carbamoyltransferase catalytic subunit (316 aa).

Carbamoyl phosphate-binding residues include Arg-58 and Thr-59. Position 86 (Lys-86) interacts with L-aspartate. Residues Arg-108, His-136, and Gln-139 each coordinate carbamoyl phosphate. L-aspartate-binding residues include Arg-169 and Arg-223. Carbamoyl phosphate-binding residues include Gly-264 and Pro-265.

Belongs to the aspartate/ornithine carbamoyltransferase superfamily. ATCase family. As to quaternary structure, heterododecamer (2C3:3R2) of six catalytic PyrB chains organized as two trimers (C3), and six regulatory PyrI chains organized as three dimers (R2).

The enzyme catalyses carbamoyl phosphate + L-aspartate = N-carbamoyl-L-aspartate + phosphate + H(+). Its pathway is pyrimidine metabolism; UMP biosynthesis via de novo pathway; (S)-dihydroorotate from bicarbonate: step 2/3. Catalyzes the condensation of carbamoyl phosphate and aspartate to form carbamoyl aspartate and inorganic phosphate, the committed step in the de novo pyrimidine nucleotide biosynthesis pathway. The protein is Aspartate carbamoyltransferase catalytic subunit of Granulibacter bethesdensis (strain ATCC BAA-1260 / CGDNIH1).